The sequence spans 414 residues: NFATC2-interacting protein (414 aa).

Residues 1-42 are disordered; that stretch reads MAEPLRRRGPRSRGGRASRGARRARAARGRCPRAPRSPTRLI. The span at 7 to 33 shows a compositional bias: basic residues; the sequence is RRGPRSRGGRASRGARRARAARGRCPR. A phosphoserine mark is found at S52 and S54. Positions 63 to 118 are disordered; that stretch reads ADPGEVPVARLPAPAAPEQDSDSDSEGAAEGPAGAPRTLVRRRRRLLDPGEAPVVP. Residues 68 to 79 show a composition bias toward low complexity; sequence VPVARLPAPAAP. A phosphoserine mark is found at S83, S85, and S87. The segment covering 90-100 has biased composition (low complexity); that stretch reads AAEGPAGAPRT. S121 carries the phosphoserine modification. K123 participates in a covalent cross-link: Glycyl lysine isopeptide (Lys-Gly) (interchain with G-Cter in SUMO2). Positions 139–208 are disordered; it reads KLCPSEPEDE…SSRNKSRKHT (70 aa). Positions 170-229 form a coiled coil; it reads KKKLRKKHEKEEKKMEEFPDQDISPLPQPSSRNKSRKHTEALQKLREVNKRLQDLRSCLS. Phosphoserine occurs at positions 193, 199, and 309. 2 positions are modified to phosphothreonine: T311 and T313. One can recognise a Ubiquitin-like domain in the interval 343–414; it reads LRLRVQGKEK…ESGDLIEVWG (72 aa). Phosphoserine is present on residues S364 and S385.

In terms of assembly, interacts with NFATC2, TRAF1, TRAF2 and PRMT1. Interacts with UBE2I/UBC9. In terms of processing, methylation at the N-terminus by PRMT1 modulates interaction with the NFAT complex and results in augmented cytokine production.

The protein localises to the nucleus. It is found in the cytoplasm. In T-helper 2 (Th2) cells, regulates the magnitude of NFAT-driven transcription of a specific subset of cytokine genes, including IL3, IL4, IL5 and IL13, but not IL2. Recruits PRMT1 to the IL4 promoter; this leads to enhancement of histone H4 'Arg-3'-methylation and facilitates subsequent histone acetylation at the IL4 locus, thus promotes robust cytokine expression. Down-regulates formation of poly-SUMO chains by UBE2I/UBC9. The protein is NFATC2-interacting protein (Nfatc2ip) of Rattus norvegicus (Rat).